Here is a 938-residue protein sequence, read N- to C-terminus: ATP-dependent 6-phosphofructokinase subunit beta (938 aa).

The segment at 1-552 is N-terminal catalytic PFK domain 1; sequence MTQSLPLLNG…HLDNFMAINS (552 aa). ATP-binding positions include G185, 249 to 250, and 279 to 282; these read RC and GDGS. D280 lines the Mg(2+) pocket. Beta-D-fructose 6-phosphate-binding positions include 325-327, R362, 369-371, E426, R454, and 460-463; these read SID, MGR, and HVQR. The active-site Proton acceptor is the D327. Positions 553-566 are interdomain linker; that stretch reads ADHIEPKLPEHTHM. A C-terminal regulatory PFK domain 2 region spans residues 567–938; the sequence is KIAIVNVGAP…ADHLVGRKKL (372 aa). Beta-D-fructose 2,6-bisphosphate-binding positions include R637, 695–699, R733, 740–742, K826, 832–835, and R915; these read TLSNN, QGG, and HVQQ.

Belongs to the phosphofructokinase type A (PFKA) family. ATP-dependent PFK group I subfamily. Eukaryotic two domain clade 'E' sub-subfamily. In terms of assembly, heterooctamer of 4 alpha and 4 beta chains. The cofactor is Mg(2+).

Its subcellular location is the cytoplasm. The enzyme catalyses beta-D-fructose 6-phosphate + ATP = beta-D-fructose 1,6-bisphosphate + ADP + H(+). It functions in the pathway carbohydrate degradation; glycolysis; D-glyceraldehyde 3-phosphate and glycerone phosphate from D-glucose: step 3/4. With respect to regulation, allosterically activated by ADP, AMP, or fructose 2,6-bisphosphate, and allosterically inhibited by ATP or citrate. Catalyzes the phosphorylation of D-fructose 6-phosphate to fructose 1,6-bisphosphate by ATP, the first committing step of glycolysis. This Kluyveromyces lactis (strain ATCC 8585 / CBS 2359 / DSM 70799 / NBRC 1267 / NRRL Y-1140 / WM37) (Yeast) protein is ATP-dependent 6-phosphofructokinase subunit beta (PFK2).